A 239-amino-acid chain; its full sequence is Ribosomal RNA small subunit methyltransferase G (239 aa).

S-adenosyl-L-methionine contacts are provided by residues Gly-78, Phe-83, 129-130 (AE), and Arg-148.

This sequence belongs to the methyltransferase superfamily. RNA methyltransferase RsmG family.

It localises to the cytoplasm. Functionally, specifically methylates the N7 position of a guanine in 16S rRNA. This is Ribosomal RNA small subunit methyltransferase G from Clostridium botulinum (strain Alaska E43 / Type E3).